Consider the following 743-residue polypeptide: TSL-kinase interacting protein 1 (743 aa).

Residues 53-104 (RQWAAWTHQEEESFFTALRQVGKNFEKITSRVQSKNKDQVRHYYYRLVRRMN) form the SANT domain. Disordered regions lie at residues 486–523 (SGVH…PGEW) and 626–679 (SPKG…TPCG). A compositionally biased stretch (basic and acidic residues) spans 488–499 (VHDRPARSRDDY).

Interacts only with active kinase forms of TOUSLED. Interacts with SNL1. Phosphorylated in vitro by TOUSLED. As to expression, expressed in flowers, roots and leaves.

Its subcellular location is the nucleus. This is TSL-kinase interacting protein 1 (TKI1) from Arabidopsis thaliana (Mouse-ear cress).